We begin with the raw amino-acid sequence, 65 residues long: Ferredoxin-like protein in vnf region (65 aa).

4Fe-4S ferredoxin-type domains are found at residues 2–30 (AMAIDGYECTVCGDCEPVCPTGSIVFRDD) and 32–65 (YAIEADSCNECTDVGEPRCLGVCPVDLCIQPLDD). [4Fe-4S] cluster is bound by residues Cys10, Cys13, Cys16, Cys20, Cys39, Cys42, Cys50, and Cys54.

Requires [4Fe-4S] cluster as cofactor.

The sequence is that of Ferredoxin-like protein in vnf region from Azotobacter vinelandii.